The sequence spans 242 residues: Biosynthetic peptidoglycan transglycosylase (242 aa).

A helical transmembrane segment spans residues 19-39; the sequence is LMVVLAIFWGGGIALFSVAPV.

It belongs to the glycosyltransferase 51 family.

The protein localises to the cell inner membrane. The enzyme catalyses [GlcNAc-(1-&gt;4)-Mur2Ac(oyl-L-Ala-gamma-D-Glu-L-Lys-D-Ala-D-Ala)](n)-di-trans,octa-cis-undecaprenyl diphosphate + beta-D-GlcNAc-(1-&gt;4)-Mur2Ac(oyl-L-Ala-gamma-D-Glu-L-Lys-D-Ala-D-Ala)-di-trans,octa-cis-undecaprenyl diphosphate = [GlcNAc-(1-&gt;4)-Mur2Ac(oyl-L-Ala-gamma-D-Glu-L-Lys-D-Ala-D-Ala)](n+1)-di-trans,octa-cis-undecaprenyl diphosphate + di-trans,octa-cis-undecaprenyl diphosphate + H(+). It functions in the pathway cell wall biogenesis; peptidoglycan biosynthesis. Its function is as follows. Peptidoglycan polymerase that catalyzes glycan chain elongation from lipid-linked precursors. The chain is Biosynthetic peptidoglycan transglycosylase from Escherichia coli O45:K1 (strain S88 / ExPEC).